We begin with the raw amino-acid sequence, 475 residues long: Mitochondrial adenyl nucleotide antiporter SLC25A24 (475 aa).

The tract at residues 1 to 173 (MLRWLRAFVL…RFWKHSTGID (173 aa)) is regulatory N-terminal domain. Topologically, residues 1–197 (MLRWLRAFVL…EKKSGQWWRQ (197 aa)) are mitochondrial intermembrane. 4 consecutive EF-hand domains span residues 19-54 (EPPTRYETLFRALDRNGDGVVDIGELQQGLQSLGIP), 55-88 (LGQDAEEKIFTTGDVNKDGKLDFEEFMKYLKDHE), 86-121 (DHEKKMKLAFKSLDKNNDGKIEPSEIVQSLQMLGLH), and 122-157 (ISEKQAELILQSIDSDGTMTVDWNEWRDYFLFNPVT). Aspartate 32, asparagine 34, aspartate 36, valine 38, glutamate 43, aspartate 68, asparagine 70, aspartate 72, lysine 74, glutamate 79, aspartate 99, asparagine 101, aspartate 103, lysine 105, glutamate 110, aspartate 135, aspartate 137, threonine 139, threonine 141, and glutamate 146 together coordinate Ca(2+). Residues 159–168 (IEEIIRFWKH) are linker region. The tract at residues 174-475 (IGDSLTIPDE…MKQTLGVAQK (302 aa)) is C-terminal transmembrane transporter domain. Solcar repeat units follow at residues 192 to 276 (GQWW…YKKL), 284 to 369 (LGTF…LKSY), and 381 to 469 (PGVM…MKQT). A helical membrane pass occupies residues 198–215 (LLAGGVAGAVSRTSTAPL). Residues 216-250 (DRLKVMMQVHGSKSMNIFGGFRQMVKEGGIRSLWR) are Mitochondrial matrix-facing. A helical transmembrane segment spans residues 251-270 (GNGTNVIKIAPETAVKFWAY). The Mitochondrial intermembrane segment spans residues 271 to 293 (EQYKKLLTEEGQKLGTFERFISG). Residues 294-307 (SMAGATAQTFIYPM) form a helical membrane-spanning segment. Over 308–343 (EVLKTRLAVAKTGQYSGIYGCAKKILKHEGFGAFYK) the chain is Mitochondrial matrix. Position 318 is an N6-acetyllysine; alternate (lysine 318). Residue lysine 318 is modified to N6-succinyllysine; alternate. Residue lysine 334 is modified to N6-acetyllysine. The chain crosses the membrane as a helical span at residues 344–363 (GYIPNLLGIIPYAGIDLAVY). Topologically, residues 364–386 (ELLKSYWLDNFAKDSVNPGVMVL) are mitochondrial intermembrane. A helical transmembrane segment spans residues 387 to 404 (LSCGALSSTCGQLASYPL). At 405–443 (ALVRTRMQAQATVEGAPQLSMVGLFQRIVSKEGVSGLYR) the chain is on the mitochondrial matrix side. The residue at position 435 (lysine 435) is an N6-acetyllysine; alternate. Position 435 is an N6-succinyllysine; alternate (lysine 435). Residues 444–463 (GITPNFMKVLPAVGISYVVY) traverse the membrane as a helical segment. The Mitochondrial intermembrane portion of the chain corresponds to 464-475 (ENMKQTLGVAQK).

This sequence belongs to the mitochondrial carrier (TC 2.A.29) family. In terms of assembly, monomer.

The protein localises to the mitochondrion inner membrane. It catalyses the reaction Mg(2+)(out) + phosphate(in) + ATP(out) = Mg(2+)(in) + phosphate(out) + ATP(in). It carries out the reaction ADP(out) + phosphate(in) + H(+)(out) = ADP(in) + phosphate(out) + H(+)(in). The enzyme catalyses AMP(out) + phosphate(in) = AMP(in) + phosphate(out). The catalysed reaction is phosphate(in) + ATP(out) + 2 H(+)(out) = phosphate(out) + ATP(in) + 2 H(+)(in). It catalyses the reaction dADP(in) + ADP(out) = dADP(out) + ADP(in). It carries out the reaction Mg(2+)(in) + ADP(out) + ATP(in) + H(+)(out) = Mg(2+)(out) + ADP(in) + ATP(out) + H(+)(in). The enzyme catalyses ADP(out) + diphosphate(in) = ADP(in) + diphosphate(out). The catalysed reaction is dAMP(in) + ADP(out) + H(+)(out) = dAMP(out) + ADP(in) + H(+)(in). It catalyses the reaction 3'-AMP(in) + ADP(out) + H(+)(out) = 3'-AMP(out) + ADP(in) + H(+)(in). It carries out the reaction dAMP(out) + phosphate(in) = dAMP(in) + phosphate(out). The enzyme catalyses 3'-AMP(out) + phosphate(in) = 3'-AMP(in) + phosphate(out). The catalysed reaction is dADP(out) + phosphate(in) + H(+)(out) = dADP(in) + phosphate(out) + H(+)(in). With respect to regulation, activated by an increase in cytosolic calcium levels that induce a conformational change of the N-terminal regulatory domain, uncapping the channel and allowing transport. Inhibited by bathophenanthroline, mersalyl, p-hydroxymercuribenzoate, bromcresol purple and tannic acid. In terms of biological role, electroneutral antiporter that mediates the transport of adenyl nucleotides through the inner mitochondrial membrane. Originally identified as an ATP-magnesium/inorganic phosphate antiporter, it also acts as a broad specificity adenyl nucleotide antiporter. By regulating the mitochondrial matrix adenyl nucleotide pool could adapt to changing cellular energetic demands and indirectly regulate adenyl nucleotide-dependent metabolic pathways. In vitro, a low activity is also observed with guanyl and pyrimidine nucleotides. May play a role in protecting cells against oxidative stress-induced cell death, by buffering calcium levels in the mitochondrial matrix through the formation of calcium-phosphate precipitates. The sequence is that of Mitochondrial adenyl nucleotide antiporter SLC25A24 from Mus musculus (Mouse).